The following is an 88-amino-acid chain: MAEAEKLVRTLTGKVVSDKMDKSVVVLIERRVKHPVYGKYVSKSTKIKAHDENNECNQGDTVTIAESRPLSKTKSWTLVKIEERATRI.

Belongs to the universal ribosomal protein uS17 family. As to quaternary structure, part of the 30S ribosomal subunit.

Functionally, one of the primary rRNA binding proteins, it binds specifically to the 5'-end of 16S ribosomal RNA. In Teredinibacter turnerae (strain ATCC 39867 / T7901), this protein is Small ribosomal subunit protein uS17.